Consider the following 246-residue polypeptide: Isoprenyl transferase 1 (246 aa).

Residue Asp19 is part of the active site. Asp19 serves as a coordination point for Mg(2+). Residues 20–23, Trp24, Arg32, His36, and 64–66 each bind substrate; these read GNGR and STD. Catalysis depends on Asn67, which acts as the Proton acceptor. Substrate contacts are provided by residues Trp68, Arg70, Arg180, and 186–188; that span reads RLS. Residue Glu199 coordinates Mg(2+).

The protein belongs to the UPP synthase family. As to quaternary structure, homodimer. Mg(2+) serves as cofactor.

Functionally, catalyzes the condensation of isopentenyl diphosphate (IPP) with allylic pyrophosphates generating different type of terpenoids. This chain is Isoprenyl transferase 1, found in Bradyrhizobium diazoefficiens (strain JCM 10833 / BCRC 13528 / IAM 13628 / NBRC 14792 / USDA 110).